A 1374-amino-acid chain; its full sequence is MAQQTFTGRKRVRKFFGHIREVAEMPNLIEVQKASYDQFLMVAEPPGGRDDEGLQAVFRSVFPISDFSNASMLEFVRYEFEPPKYDVDECRQRGMTYAAPLKVTLRLIVFDIDEETGARSVKDIKEQDVYMGDIPLMTMNGTFVVNGTERVIVSQMHRSPGVFFDHDKGKTHSSGKLLFAARVIPYRGSWLDIEFDAKDIVFARIDRRRKIPVTSLMFALGLDGEEILSTFYKKILYKRIKEGWRVPFDANRFRGYSTVNDLIDADTGKVVLEAGKKLTVRAARQLQEKGLKALRLSDEELVGNYLAEDLVNPKTGEIYAEAGEEITEKSLKALNEEGYKELPLLDIDHVNIGPYIRNTLSADKNMTREDALFDIYRVMRPGEPPTLDSAQNMFQSLFFDSERYDLSAVGRVKMNMRLDLDAPDTHRTLRKEDILAVIKTLVGLRDGKGEIDDIDHLGNRRVRSVGELMENQYRIGLLRMERAIKERMSSVDIDTVMPQDLINAKPAAAAVREFFGSSQLSQFMDQTNPLSEITHKRRLSALGPGGLTRERAGFEVRDVHPTHYGRICPIETPEGPNIGLINSLATFARVNKYGFVETPYRKVKEGRVTDEVVYLSAMEEGRYAVAQANISLDAKGRFTDDLIVCRAGGTRDVVLIPADQVDYMDVSPKQLVSVAAALIPFLENDDANRALMGSNMQRQAVPLVRAEAPFVGTGMEGVVARDSGAAIAARRTGVIDQIDATRIVIRATEDLDPTKSGVDIYRLMKYQRSNQSTCINQRPLVKVGDSVAKGDIIADGPSTDLGELALGRNVLVAFMPWNGYNFEDSILLSERIVKEDVFTSIHIEEFEVMARDTKLGPEEITRDIPNVSEEALKNLDEAGIVYIGAEVRAGDILVGKITPKGESPMTPEEKLLRAIFGEKASDVRDTSLRVPPGVQGTIVEVRVFNRHGVDKDERALAIEREEIERLAKDRDDEQAILDRNVYGRLADLLDNRQGVSGPKGFKKDTKITRAVLEEYPKSQWWLFAAPNDKLMAEIEAMRKQYDESKKGLEQRFLDKVEKLQRGDELPPGVMKMVKVFVAVKRKIQPGDKMAGRHGNKGVVSKIVPIEDMPFLEDGTHADIVLNPLGVPSRMNVGQILETHLGWACAGMGKKIGQTIDAYYQRQDLKPLRETLKKIYGDDETIKSLNDGELIELGRNLSHGVPIATPVFDGAKEADIEEMLKLAGFDASGQSTVYDGRTGDEFDRKVTVGYIYMLKLHHLVDDKIHARSIGPYSLVTQQPLGGKAQFGGQRFGEMEVWALEAYGAAYTLQEMLTVKSDDVAGRTKVYEAIVRGDDTFEAGIPESFNVLVKEMRSLGLNVDLHNSKLGVPPPAEAAE.

The protein belongs to the RNA polymerase beta chain family. The RNAP catalytic core consists of 2 alpha, 1 beta, 1 beta' and 1 omega subunit. When a sigma factor is associated with the core the holoenzyme is formed, which can initiate transcription.

It catalyses the reaction RNA(n) + a ribonucleoside 5'-triphosphate = RNA(n+1) + diphosphate. Its function is as follows. DNA-dependent RNA polymerase catalyzes the transcription of DNA into RNA using the four ribonucleoside triphosphates as substrates. The sequence is that of DNA-directed RNA polymerase subunit beta from Rhodopseudomonas palustris (strain BisB5).